A 551-amino-acid polypeptide reads, in one-letter code: DEAD-box ATP-dependent RNA helicase 47, mitochondrial (551 aa).

Residues Met1–Thr29 constitute a mitochondrion transit peptide. A Q motif motif is present at residues Lys110–Ser138. The region spanning Val141–Val340 is the Helicase ATP-binding domain. Ser154–Thr161 serves as a coordination point for ATP. The DEAD box motif lies at Asp274 to Asp277. Residues Thr397–Ala548 form the Helicase C-terminal domain.

The protein belongs to the DEAD box helicase family. Mostly expressed in leaves and flowers, and, to a lower extent, in roots, seedlings and siliques, especially in meristematic regions.

The protein localises to the mitochondrion. The enzyme catalyses ATP + H2O = ADP + phosphate + H(+). In terms of biological role, essential protein required during embryogenesis. Required for mitochondrial metabolism. Necessary for normal plasmodesmata (PD) development and aperture regulation. The protein is DEAD-box ATP-dependent RNA helicase 47, mitochondrial (RH47) of Arabidopsis thaliana (Mouse-ear cress).